The sequence spans 757 residues: Polyribonucleotide nucleotidyltransferase (757 aa).

The Mg(2+) site is built by Asp-525 and Asp-531. The 60-residue stretch at 591 to 650 (PRVISVNIPVDKIGELIGPKGKTINAIQDETGADISIEEDGAVYIGAVDGPSAEAARAQV) folds into the KH domain. The region spanning 662 to 734 (GESFLGTVVK…DRGKLSLAPV (73 aa)) is the S1 motif domain. The tract at residues 736-757 (EEAADQEGSAAASDGPEAPAEG) is disordered.

Belongs to the polyribonucleotide nucleotidyltransferase family. It depends on Mg(2+) as a cofactor.

It is found in the cytoplasm. It carries out the reaction RNA(n+1) + phosphate = RNA(n) + a ribonucleoside 5'-diphosphate. Functionally, involved in mRNA degradation. Catalyzes the phosphorolysis of single-stranded polyribonucleotides processively in the 3'- to 5'-direction. The chain is Polyribonucleotide nucleotidyltransferase from Clavibacter sepedonicus (Clavibacter michiganensis subsp. sepedonicus).